A 42-amino-acid chain; its full sequence is Photosystem I reaction center subunit IX (42 aa).

Residues 7 to 27 (YLSTAPVLAAVWFTVLAGILI) traverse the membrane as a helical segment.

This sequence belongs to the PsaJ family.

The protein localises to the plastid. It localises to the chloroplast thylakoid membrane. Its function is as follows. May help in the organization of the PsaE and PsaF subunits. This is Photosystem I reaction center subunit IX from Ostreococcus tauri.